Reading from the N-terminus, the 103-residue chain is Nematocin (103 aa).

A signal peptide spans 1–19; the sequence is MGSSPILLVLAISIGLASA. A disulfide bridge connects residues Cys-20 and Cys-25. A Tyrosine amide modification is found at Tyr-30. A propeptide spanning residues 31-103 is cleaved from the precursor; the sequence is GRTIRCSSCG…QGGCQTSAMC (73 aa).

Belongs to the vasopressin/oxytocin family. Detected in thermosensory AFD neurons, neurosecretory NSM cells, AVK interneurons, pharyngeal neuron M5, and the mechanosensory DVA neuron. Detected in male-specific CP motor neurons.

Its subcellular location is the secreted. Ligand for the G-protein coupled receptor ntr-1. Plays a role in gustatory associative learning. Also plays a role in male mating behavior. This is Nematocin from Caenorhabditis elegans.